We begin with the raw amino-acid sequence, 346 residues long: Phosphoribosylformylglycinamidine cyclo-ligase (346 aa).

The protein belongs to the AIR synthase family.

It localises to the cytoplasm. It catalyses the reaction 2-formamido-N(1)-(5-O-phospho-beta-D-ribosyl)acetamidine + ATP = 5-amino-1-(5-phospho-beta-D-ribosyl)imidazole + ADP + phosphate + H(+). The protein operates within purine metabolism; IMP biosynthesis via de novo pathway; 5-amino-1-(5-phospho-D-ribosyl)imidazole from N(2)-formyl-N(1)-(5-phospho-D-ribosyl)glycinamide: step 2/2. The polypeptide is Phosphoribosylformylglycinamidine cyclo-ligase (Geobacillus thermodenitrificans (strain NG80-2)).